Consider the following 440-residue polypeptide: Xylose isomerase (440 aa).

Active-site residues include His100 and Asp103. Residues Glu231, Glu267, His270, Asp295, Asp306, Asp308, and Asp338 each coordinate Mg(2+).

This sequence belongs to the xylose isomerase family. As to quaternary structure, homotetramer. It depends on Mg(2+) as a cofactor.

Its subcellular location is the cytoplasm. The enzyme catalyses alpha-D-xylose = alpha-D-xylulofuranose. The protein is Xylose isomerase of Burkholderia ambifaria (strain MC40-6).